The chain runs to 216 residues: SHKVSGGLHGVGVSVVNALSSKLELTVQRAGQIHEQEYQHGVPQYPLRVVGQTERTGTKVRFWPSAETFSQTIFNVDILARRLRELSFLNAGVRIVLCDERINLEHVFDYEGGLSEKSALDIAGLPGKLADCQEKDPALSELFLVEGDSAGGSAKQGRNRKMQAILPLKGKILNVERARFDRMISSAEVGTLITALGCGIGREEYNPDKLRYHKIV.

The Toprim domain maps to 140–216; sequence SELFLVEGDS…PDKLRYHKIV (77 aa).

It belongs to the type II topoisomerase GyrB family. In terms of assembly, heterotetramer, composed of two GyrA and two GyrB chains. In the heterotetramer, GyrA contains the active site tyrosine that forms a transient covalent intermediate with DNA, while GyrB binds cofactors and catalyzes ATP hydrolysis.

The protein localises to the cytoplasm. The catalysed reaction is ATP-dependent breakage, passage and rejoining of double-stranded DNA.. Functionally, a type II topoisomerase that negatively supercoils closed circular double-stranded (ds) DNA in an ATP-dependent manner to modulate DNA topology and maintain chromosomes in an underwound state. Negative supercoiling favors strand separation, and DNA replication, transcription, recombination and repair, all of which involve strand separation. Also able to catalyze the interconversion of other topological isomers of dsDNA rings, including catenanes and knotted rings. Type II topoisomerases break and join 2 DNA strands simultaneously in an ATP-dependent manner. This Acinetobacter sp. (strain SEIP 12.81) protein is DNA gyrase subunit B (gyrB).